The sequence spans 135 residues: Large ribosomal subunit protein eL32 (135 aa).

Belongs to the eukaryotic ribosomal protein eL32 family.

The sequence is that of Large ribosomal subunit protein eL32 from Methanococcus maripaludis (strain C6 / ATCC BAA-1332).